Here is a 425-residue protein sequence, read N- to C-terminus: Serine--tRNA ligase (425 aa).

233 to 235 (TAE) is an L-serine binding site. Residue 264-266 (RRE) coordinates ATP. Residue E287 coordinates L-serine. 351–354 (EISS) serves as a coordination point for ATP. S387 contacts L-serine.

This sequence belongs to the class-II aminoacyl-tRNA synthetase family. Type-1 seryl-tRNA synthetase subfamily. In terms of assembly, homodimer. The tRNA molecule binds across the dimer.

The protein resides in the cytoplasm. It catalyses the reaction tRNA(Ser) + L-serine + ATP = L-seryl-tRNA(Ser) + AMP + diphosphate + H(+). The catalysed reaction is tRNA(Sec) + L-serine + ATP = L-seryl-tRNA(Sec) + AMP + diphosphate + H(+). It participates in aminoacyl-tRNA biosynthesis; selenocysteinyl-tRNA(Sec) biosynthesis; L-seryl-tRNA(Sec) from L-serine and tRNA(Sec): step 1/1. Catalyzes the attachment of serine to tRNA(Ser). Is also able to aminoacylate tRNA(Sec) with serine, to form the misacylated tRNA L-seryl-tRNA(Sec), which will be further converted into selenocysteinyl-tRNA(Sec). The polypeptide is Serine--tRNA ligase (Thermotoga petrophila (strain ATCC BAA-488 / DSM 13995 / JCM 10881 / RKU-1)).